The following is a 793-amino-acid chain: Potassium transporter 18 (793 aa).

Over 1–53 (METRTNEYSRKGAMWELERNLDQPMDAEAGRLRNMYREKTYPTILLLRLAFQS) the chain is Cytoplasmic. Residues 54–74 (LGVVFGDLGTSPLYVFYNIFP) form a helical membrane-spanning segment. The Extracellular portion of the chain corresponds to 75-86 (HGIEDTEQVIGA). The helical transmembrane segment at 87–107 (LSLIIYSLTLIPLVKYVFIVL) threads the bilayer. Residues 108–172 (RANDNGQGGT…WLEGHQFRKN (65 aa)) lie on the Cytoplasmic side of the membrane. Residues 173–193 (LILILVLFGTCMAVGDGILTP) traverse the membrane as a helical segment. Over 194–214 (AISVLSATGGIQVEEGRMRND) the chain is Extracellular. The chain crosses the membrane as a helical span at residues 215–235 (VVVIISVLILIGLFSMQHYGT). Over 236-237 (DK) the chain is Cytoplasmic. Residues 238-258 (VSWLFAPIVFVWFILIGILGA) form a helical membrane-spanning segment. Residues 259–287 (VNICKYDHSVLKAFNPVYVYRYFKRGKTS) lie on the Extracellular side of the membrane. The chain crosses the membrane as a helical span at residues 288-308 (WTSLGGIMLSITGTEALFADL). A topological domain (cytoplasmic) is located at residue serine 309. Residues 310 to 330 (YFPVQAIQIAFTVVVFPCLLL) traverse the membrane as a helical segment. At 331–351 (QYTGQAAFIAANTNQVSHAFY) the chain is on the extracellular side. Residues 352–372 (ISLPAPILWPAFAVATAAAIV) traverse the membrane as a helical segment. Residues 373-409 (ASQATISATYSIIKQALALGCFPRVKIIHTSKKYLGQ) are Cytoplasmic-facing. The helical transmembrane segment at 410-430 (IYSPDINWILMVFCIAVTAGF) threads the bilayer. Topologically, residues 431-442 (KNQSQIANAYGT) are extracellular. The N-linked (GlcNAc...) asparagine glycan is linked to asparagine 432. The helical transmembrane segment at 443-463 (AVIMVMLVTTFLMIPIMLLVW) threads the bilayer. The Cytoplasmic segment spans residues 464-468 (RSHWT). A helical membrane pass occupies residues 469–489 (LVVAFTVLSLLVEIPYFSAVV). The Extracellular portion of the chain corresponds to 490-494 (RKIDQ). The helical transmembrane segment at 495–515 (GGWVPLVFAAGFMIIMYVWHY) threads the bilayer. Topologically, residues 516–793 (GTLKRYEFEM…MLNVGQVFYV (278 aa)) are cytoplasmic.

It belongs to the HAK/KUP transporter (TC 2.A.72.3) family.

The protein localises to the membrane. In terms of biological role, high-affinity potassium transporter. This is Potassium transporter 18 (HAK18) from Oryza sativa subsp. japonica (Rice).